Consider the following 118-residue polypeptide: D-dopachrome decarboxylase (118 aa).

Proline 2 bears the N-acetylproline mark. Lysine 33 is modified (N6-acetyllysine).

It belongs to the MIF family. Homotrimer. In terms of tissue distribution, highly expressed in the liver and at lower levels in the heart, lung and pancreas.

The protein localises to the cytoplasm. It carries out the reaction D-dopachrome + H(+) = 5,6-dihydroxyindole + CO2. In terms of biological role, tautomerization of D-dopachrome with decarboxylation to give 5,6-dihydroxyindole (DHI). This is D-dopachrome decarboxylase (DDT) from Homo sapiens (Human).